The chain runs to 114 residues: Protein preY, mitochondrial (114 aa).

A mitochondrion-targeting transit peptide spans 1–35 (MLSGARCRLASALRGTRAPPSAVARRCLHASGSRP). Residues 14–49 (RGTRAPPSAVARRCLHASGSRPLADRGKKTEEPPRD) form a disordered region. Basic and acidic residues predominate over residues 36 to 49 (LADRGKKTEEPPRD). The region spanning 51–97 (DPALLEFLVCPLSKKPLRYEASTNELINEELGIAYPIIDGIPNMIPQ) is the TRM112 domain.

Belongs to the PREY family. As to quaternary structure, interacts (via TRM112 domain) with NDUFAF5; the interaction is direct and stabilizes NDUFAF5 protein. Interacts with COQ5; the interaction is direct, stabilizes COQ5 protein and associates PYURF with COQ enzyme complex.

The protein localises to the mitochondrion. Functionally, in mitochondria, S-adenosylmethionine-dependent methyltransferase chaperone that supports both coenzyme Q biosynthesis, by stabilizing its components, such as COQ5, and NADH:ubiquinone oxidoreductase complex (complex I, MT-ND1) assembly, by stabilizing complex I assembly factors, such as NDUFAF5. The polypeptide is Protein preY, mitochondrial (Homo sapiens (Human)).